The sequence spans 353 residues: N-acetyl-gamma-glutamyl-phosphate reductase (353 aa).

Cysteine 157 is a catalytic residue.

This sequence belongs to the NAGSA dehydrogenase family. Type 1 subfamily.

It is found in the cytoplasm. The enzyme catalyses N-acetyl-L-glutamate 5-semialdehyde + phosphate + NADP(+) = N-acetyl-L-glutamyl 5-phosphate + NADPH + H(+). It functions in the pathway amino-acid biosynthesis; L-arginine biosynthesis; N(2)-acetyl-L-ornithine from L-glutamate: step 3/4. Catalyzes the NADPH-dependent reduction of N-acetyl-5-glutamyl phosphate to yield N-acetyl-L-glutamate 5-semialdehyde. The chain is N-acetyl-gamma-glutamyl-phosphate reductase from Bordetella avium (strain 197N).